The primary structure comprises 591 residues: Aspartate--tRNA ligase (591 aa).

Glutamate 176 is a binding site for L-aspartate. Positions 200-203 are aspartate; the sequence is QILK. Arginine 222 contributes to the L-aspartate binding site. ATP-binding positions include 222 to 224 and glutamine 231; that span reads RDE. Histidine 450 is a binding site for L-aspartate. Glutamate 484 contacts ATP. Arginine 491 is a binding site for L-aspartate. Residue 536 to 539 participates in ATP binding; that stretch reads GLDR.

Belongs to the class-II aminoacyl-tRNA synthetase family. Type 1 subfamily. In terms of assembly, homodimer.

The protein localises to the cytoplasm. The enzyme catalyses tRNA(Asp) + L-aspartate + ATP = L-aspartyl-tRNA(Asp) + AMP + diphosphate. Functionally, catalyzes the attachment of L-aspartate to tRNA(Asp) in a two-step reaction: L-aspartate is first activated by ATP to form Asp-AMP and then transferred to the acceptor end of tRNA(Asp). The sequence is that of Aspartate--tRNA ligase from Listeria monocytogenes serotype 4b (strain F2365).